The sequence spans 103 residues: Protamine-2 (103 aa).

The tract at residues 1-103 (MVRYRMRSLS…RTRRRRCRRH (103 aa)) is disordered. Residues Ser-8 and Ser-10 each carry the phosphoserine modification. A compositionally biased stretch (basic and acidic residues) spans 8-17 (SLSERPHEVH). The segment covering 18–29 (GQQVHGQDQGHN) has biased composition (low complexity). Over residues 48 to 103 (HRGHSHHRRRRCSRRRLHRIHRRRHRSCRRRRRRSCRHRRRHRRGCRTRRRRCRRH) the composition is skewed to basic residues.

It belongs to the protamine P2 family. As to quaternary structure, interacts with TDRP. Proteolytic processing into mature chains is required for histone eviction during spermatogenesis. Transition proteins (TNP1 and TNP2) are required for processing. Testis.

Its subcellular location is the nucleus. The protein resides in the chromosome. Its function is as follows. Protamines substitute for histones in the chromatin of sperm during the haploid phase of spermatogenesis. They compact sperm DNA into a highly condensed, stable and inactive complex. The chain is Protamine-2 (PRM2) from Macaca nemestrina (Pig-tailed macaque).